The primary structure comprises 210 residues: Probable membrane protein MT1774 (210 aa).

2 consecutive transmembrane segments (helical) span residues 43–63 and 165–185; these read AVVM…AAAA and ALAA…LLAL.

Its subcellular location is the cell membrane. The sequence is that of Probable membrane protein MT1774 from Mycobacterium tuberculosis (strain CDC 1551 / Oshkosh).